Here is a 158-residue protein sequence, read N- to C-terminus: MVEKVPMTSGGYAALENELKQRQSVDRPRIIEHIAEARSHGDLSENAEYHAAKEEQSHNEGRIAELEDKLARADVIDVTKLSGETIKFGATVTLIDEDTEKKTVWQIVGEVEADAKKGKISITSPLARALIGKKMGTTVEVMAPGGAKSYEIAKVEWR.

A coiled-coil region spans residues 47 to 74; that stretch reads AEYHAAKEEQSHNEGRIAELEDKLARAD.

The protein belongs to the GreA/GreB family.

Functionally, necessary for efficient RNA polymerase transcription elongation past template-encoded arresting sites. The arresting sites in DNA have the property of trapping a certain fraction of elongating RNA polymerases that pass through, resulting in locked ternary complexes. Cleavage of the nascent transcript by cleavage factors such as GreA or GreB allows the resumption of elongation from the new 3'terminus. GreA releases sequences of 2 to 3 nucleotides. The chain is Transcription elongation factor GreA from Bradyrhizobium sp. (strain BTAi1 / ATCC BAA-1182).